The sequence spans 500 residues: Probable cytosol aminopeptidase (500 aa).

K268 and D273 together coordinate Mn(2+). The active site involves K280. 3 residues coordinate Mn(2+): D291, D350, and E352. Residue R354 is part of the active site.

Belongs to the peptidase M17 family. Requires Mn(2+) as cofactor.

It is found in the cytoplasm. The enzyme catalyses Release of an N-terminal amino acid, Xaa-|-Yaa-, in which Xaa is preferably Leu, but may be other amino acids including Pro although not Arg or Lys, and Yaa may be Pro. Amino acid amides and methyl esters are also readily hydrolyzed, but rates on arylamides are exceedingly low.. It carries out the reaction Release of an N-terminal amino acid, preferentially leucine, but not glutamic or aspartic acids.. Presumably involved in the processing and regular turnover of intracellular proteins. Catalyzes the removal of unsubstituted N-terminal amino acids from various peptides. The protein is Probable cytosol aminopeptidase of Aromatoleum aromaticum (strain DSM 19018 / LMG 30748 / EbN1) (Azoarcus sp. (strain EbN1)).